The chain runs to 79 residues: Large ribosomal subunit protein bL28 (79 aa).

It belongs to the bacterial ribosomal protein bL28 family.

The protein is Large ribosomal subunit protein bL28 of Porphyromonas gingivalis (strain ATCC 33277 / DSM 20709 / CIP 103683 / JCM 12257 / NCTC 11834 / 2561).